A 420-amino-acid chain; its full sequence is Pectate lyase (420 aa).

The signal sequence occupies residues 1–21; the sequence is MKKVMLATALFLGLTPAGANA. Positions 117-139 are disordered; it reads TWGKKEPSGTQEEARARSQKNQK. A compositionally biased stretch (basic and acidic residues) spans 119-132; sequence GKKEPSGTQEEARA. Residues Asp205, Asp244, and Asp248 each contribute to the Ca(2+) site. Residue Arg300 is part of the active site.

The protein belongs to the polysaccharide lyase 1 family. Monomer. It depends on Ca(2+) as a cofactor.

Its subcellular location is the secreted. The enzyme catalyses Eliminative cleavage of (1-&gt;4)-alpha-D-galacturonan to give oligosaccharides with 4-deoxy-alpha-D-galact-4-enuronosyl groups at their non-reducing ends.. Its pathway is glycan metabolism; pectin degradation; 2-dehydro-3-deoxy-D-gluconate from pectin: step 2/5. In terms of biological role, produces unsaturated products from polygalacturonate. The chain is Pectate lyase (pel) from Bacillus subtilis (strain 168).